The chain runs to 469 residues: Spermatogenesis-associated protein 21 (469 aa).

Disordered stretches follow at residues Met1–Gln76 and His99–Pro157. A compositionally biased stretch (basic and acidic residues) spans Glu49–Arg61. The span at Ala62 to Ala73 shows a compositional bias: low complexity. Residues Ala105–Ala132 are compositionally biased toward polar residues. A compositionally biased stretch (pro residues) spans Ala146 to Pro157. Residues Glu198 to Ala225 are a coiled coil. The EF-hand domain occupies Val255–Phe290. Ca(2+) is bound by residues Asp268, Asn270, Asp272, Arg274, and Asp279. A disordered region spans residues Tyr424–His469. A compositionally biased stretch (basic and acidic residues) spans Asn450–Lys459.

In terms of biological role, involved in the differentiation of haploid spermatids. The sequence is that of Spermatogenesis-associated protein 21 (SPATA21) from Homo sapiens (Human).